We begin with the raw amino-acid sequence, 532 residues long: Phosphoenolpyruvate carboxykinase (ATP) (532 aa).

Substrate is bound by residues arginine 60, tyrosine 194, and lysine 200. ATP contacts are provided by residues lysine 200, histidine 219, and 237 to 245 (GLSGTGKTT). The Mn(2+) site is built by lysine 200 and histidine 219. Aspartate 258 lines the Mn(2+) pocket. Positions 286, 324, and 449 each coordinate ATP. Arginine 324 is a substrate binding site.

This sequence belongs to the phosphoenolpyruvate carboxykinase (ATP) family. Mn(2+) serves as cofactor.

It localises to the cytoplasm. It catalyses the reaction oxaloacetate + ATP = phosphoenolpyruvate + ADP + CO2. The protein operates within carbohydrate biosynthesis; gluconeogenesis. Functionally, involved in the gluconeogenesis. Catalyzes the conversion of oxaloacetate (OAA) to phosphoenolpyruvate (PEP) through direct phosphoryl transfer between the nucleoside triphosphate and OAA. This chain is Phosphoenolpyruvate carboxykinase (ATP), found in Paracoccus denitrificans (strain Pd 1222).